Consider the following 312-residue polypeptide: 4-hydroxy-3-methylbut-2-enyl diphosphate reductase (312 aa).

C15 lines the [4Fe-4S] cluster pocket. 2 residues coordinate (2E)-4-hydroxy-3-methylbut-2-enyl diphosphate: H44 and H77. Dimethylallyl diphosphate-binding residues include H44 and H77. Residues H44 and H77 each contribute to the isopentenyl diphosphate site. C99 contacts [4Fe-4S] cluster. H127 is a binding site for (2E)-4-hydroxy-3-methylbut-2-enyl diphosphate. H127 contacts dimethylallyl diphosphate. H127 serves as a coordination point for isopentenyl diphosphate. E129 functions as the Proton donor in the catalytic mechanism. Residue T167 coordinates (2E)-4-hydroxy-3-methylbut-2-enyl diphosphate. Position 197 (C197) interacts with [4Fe-4S] cluster. (2E)-4-hydroxy-3-methylbut-2-enyl diphosphate contacts are provided by S225, S226, N227, and S269. Dimethylallyl diphosphate contacts are provided by S225, S226, N227, and S269. S225, S226, N227, and S269 together coordinate isopentenyl diphosphate.

It belongs to the IspH family. The cofactor is [4Fe-4S] cluster.

The catalysed reaction is isopentenyl diphosphate + 2 oxidized [2Fe-2S]-[ferredoxin] + H2O = (2E)-4-hydroxy-3-methylbut-2-enyl diphosphate + 2 reduced [2Fe-2S]-[ferredoxin] + 2 H(+). It carries out the reaction dimethylallyl diphosphate + 2 oxidized [2Fe-2S]-[ferredoxin] + H2O = (2E)-4-hydroxy-3-methylbut-2-enyl diphosphate + 2 reduced [2Fe-2S]-[ferredoxin] + 2 H(+). It participates in isoprenoid biosynthesis; dimethylallyl diphosphate biosynthesis; dimethylallyl diphosphate from (2E)-4-hydroxy-3-methylbutenyl diphosphate: step 1/1. The protein operates within isoprenoid biosynthesis; isopentenyl diphosphate biosynthesis via DXP pathway; isopentenyl diphosphate from 1-deoxy-D-xylulose 5-phosphate: step 6/6. In terms of biological role, catalyzes the conversion of 1-hydroxy-2-methyl-2-(E)-butenyl 4-diphosphate (HMBPP) into a mixture of isopentenyl diphosphate (IPP) and dimethylallyl diphosphate (DMAPP). Acts in the terminal step of the DOXP/MEP pathway for isoprenoid precursor biosynthesis. This chain is 4-hydroxy-3-methylbut-2-enyl diphosphate reductase, found in Aromatoleum aromaticum (strain DSM 19018 / LMG 30748 / EbN1) (Azoarcus sp. (strain EbN1)).